We begin with the raw amino-acid sequence, 482 residues long: Probable cytochrome P450 508D1 (482 aa).

A helical transmembrane segment spans residues 1–21; the sequence is MVYLKNILIFLIIFLINPLVK. Residue C428 coordinates heme.

Belongs to the cytochrome P450 family. Heme is required as a cofactor.

Its subcellular location is the membrane. The sequence is that of Probable cytochrome P450 508D1 (cyp508D1) from Dictyostelium discoideum (Social amoeba).